Consider the following 106-residue polypeptide: Large ribosomal subunit protein uL24 (106 aa).

It belongs to the universal ribosomal protein uL24 family. In terms of assembly, part of the 50S ribosomal subunit.

One of two assembly initiator proteins, it binds directly to the 5'-end of the 23S rRNA, where it nucleates assembly of the 50S subunit. In terms of biological role, one of the proteins that surrounds the polypeptide exit tunnel on the outside of the subunit. In Acinetobacter baylyi (strain ATCC 33305 / BD413 / ADP1), this protein is Large ribosomal subunit protein uL24.